The following is a 199-amino-acid chain: UPF0329 protein ECU01_0120/ECU01_1490/ECU08_0050 (199 aa).

This sequence belongs to the UPF0329 family.

This chain is UPF0329 protein ECU01_0120/ECU01_1490/ECU08_0050, found in Encephalitozoon cuniculi (strain GB-M1) (Microsporidian parasite).